Here is a 238-residue protein sequence, read N- to C-terminus: Purine nucleoside phosphorylase DeoD-type (238 aa).

Residue histidine 5 participates in a purine D-ribonucleoside binding. Phosphate is bound by residues glycine 21, arginine 25, arginine 44, and 88–91; that span reads RVGS. Residues 180–182 and 204–205 each bind a purine D-ribonucleoside; these read EME and SD. The active-site Proton donor is the aspartate 205.

The protein belongs to the PNP/UDP phosphorylase family. In terms of assembly, homohexamer; trimer of homodimers.

It catalyses the reaction a purine D-ribonucleoside + phosphate = a purine nucleobase + alpha-D-ribose 1-phosphate. The enzyme catalyses a purine 2'-deoxy-D-ribonucleoside + phosphate = a purine nucleobase + 2-deoxy-alpha-D-ribose 1-phosphate. In terms of biological role, catalyzes the reversible phosphorolytic breakdown of the N-glycosidic bond in the beta-(deoxy)ribonucleoside molecules, with the formation of the corresponding free purine bases and pentose-1-phosphate. The protein is Purine nucleoside phosphorylase DeoD-type of Photorhabdus laumondii subsp. laumondii (strain DSM 15139 / CIP 105565 / TT01) (Photorhabdus luminescens subsp. laumondii).